The sequence spans 278 residues: Pantothenate synthetase (278 aa).

26-33 (MGNLHEGH) is an ATP binding site. The active-site Proton donor is the His-33. Gln-57 is a binding site for (R)-pantoate. Gln-57 is a binding site for beta-alanine. 144-147 (GKKD) contributes to the ATP binding site. Gln-150 is a binding site for (R)-pantoate. Residues Gly-173 and 181-184 (LSSR) contribute to the ATP site.

Belongs to the pantothenate synthetase family. As to quaternary structure, homodimer.

The protein resides in the cytoplasm. The enzyme catalyses (R)-pantoate + beta-alanine + ATP = (R)-pantothenate + AMP + diphosphate + H(+). It participates in cofactor biosynthesis; (R)-pantothenate biosynthesis; (R)-pantothenate from (R)-pantoate and beta-alanine: step 1/1. Its function is as follows. Catalyzes the condensation of pantoate with beta-alanine in an ATP-dependent reaction via a pantoyl-adenylate intermediate. The sequence is that of Pantothenate synthetase from Neisseria meningitidis serogroup A / serotype 4A (strain DSM 15465 / Z2491).